We begin with the raw amino-acid sequence, 143 residues long: Agaricus bisporus lectin (143 aa).

Beta-D-Gal-(1-&gt;3)-alpha-D-GalNAc is bound by residues alanine 29, serine 48, glycine 49, and asparagine 73. Residues threonine 82, arginine 103, and tyrosine 114 each contribute to the N-acetyl-beta-D-glucosamine site.

This sequence belongs to the fungal fruit body lectin family. In terms of assembly, homotetramer.

In terms of biological role, lectin that recognizes O-linked galactose-beta-1,3-N-acetylgalactosamine, a disaccharide (Thomsen-Friedenreich antigen or T-disaccharide), present on cell surface glycoproteins. Can also bind galactose-beta-1,3-N-acetylglucosamine. Does not bind monosaccharides. Can be internalized by clathrin-coated vesicles after binding to surface glycoproteins. After internalization it inhibits nuclear import of nuclear localization signal dependent proteins. Inhibits proliferation of malignant cells without cytotoxicity for normal cells. In Agaricus bisporus (White button mushroom), this protein is Agaricus bisporus lectin.